Reading from the N-terminus, the 235-residue chain is MNISNPNGNRKAVVIFSGGQDSTTCLLQAIRDYGPNNVEAVTFQYGQRHAIELQKAQWIAQDLGVKQTLIDTSVIKTITTNAMMSDAQIKQDENGMPNTFVDGRNALFLLYAAIYAKGQGITDIITGVCETDFSGYPDCRNVFIKSMNVTLNLAMDYQFNIRTPLMYLTKAQTWQLADELGALDYVRQYTHTCYLGVEGGCGTCPSCLLREKGLKQYLAQKSAVEKSSVLTAKEA.

An ATP-binding site is contributed by 16 to 26 (FSGGQDSTTCL). Residues Cys193, Cys201, Cys204, and Cys207 each coordinate Zn(2+).

This sequence belongs to the QueC family. Zn(2+) serves as cofactor.

The enzyme catalyses 7-carboxy-7-deazaguanine + NH4(+) + ATP = 7-cyano-7-deazaguanine + ADP + phosphate + H2O + H(+). It participates in purine metabolism; 7-cyano-7-deazaguanine biosynthesis. Functionally, catalyzes the ATP-dependent conversion of 7-carboxy-7-deazaguanine (CDG) to 7-cyano-7-deazaguanine (preQ(0)). The sequence is that of 7-cyano-7-deazaguanine synthase from Actinobacillus succinogenes (strain ATCC 55618 / DSM 22257 / CCUG 43843 / 130Z).